The primary structure comprises 254 residues: Thiazole synthase (254 aa).

K96 serves as the catalytic Schiff-base intermediate with DXP. 1-deoxy-D-xylulose 5-phosphate contacts are provided by residues G157, 183–184, and 205–206; these read AG and NT.

This sequence belongs to the ThiG family. Homotetramer. Forms heterodimers with either ThiH or ThiS.

The protein resides in the cytoplasm. The enzyme catalyses [ThiS sulfur-carrier protein]-C-terminal-Gly-aminoethanethioate + 2-iminoacetate + 1-deoxy-D-xylulose 5-phosphate = [ThiS sulfur-carrier protein]-C-terminal Gly-Gly + 2-[(2R,5Z)-2-carboxy-4-methylthiazol-5(2H)-ylidene]ethyl phosphate + 2 H2O + H(+). Its pathway is cofactor biosynthesis; thiamine diphosphate biosynthesis. In terms of biological role, catalyzes the rearrangement of 1-deoxy-D-xylulose 5-phosphate (DXP) to produce the thiazole phosphate moiety of thiamine. Sulfur is provided by the thiocarboxylate moiety of the carrier protein ThiS. In vitro, sulfur can be provided by H(2)S. The sequence is that of Thiazole synthase from Bacillus velezensis (strain DSM 23117 / BGSC 10A6 / LMG 26770 / FZB42) (Bacillus amyloliquefaciens subsp. plantarum).